We begin with the raw amino-acid sequence, 428 residues long: Enolase (428 aa).

Residue Gln-163 coordinates (2R)-2-phosphoglycerate. Catalysis depends on Glu-205, which acts as the Proton donor. The Mg(2+) site is built by Asp-242, Glu-285, and Asp-312. (2R)-2-phosphoglycerate contacts are provided by Lys-337, Arg-366, Ser-367, and Lys-388. Lys-337 serves as the catalytic Proton acceptor.

This sequence belongs to the enolase family. Mg(2+) is required as a cofactor.

It localises to the cytoplasm. The protein resides in the secreted. Its subcellular location is the cell surface. The enzyme catalyses (2R)-2-phosphoglycerate = phosphoenolpyruvate + H2O. It functions in the pathway carbohydrate degradation; glycolysis; pyruvate from D-glyceraldehyde 3-phosphate: step 4/5. Its function is as follows. Catalyzes the reversible conversion of 2-phosphoglycerate (2-PG) into phosphoenolpyruvate (PEP). It is essential for the degradation of carbohydrates via glycolysis. This Nitrosomonas eutropha (strain DSM 101675 / C91 / Nm57) protein is Enolase.